Here is a 563-residue protein sequence, read N- to C-terminus: Sulfite reductase [NADPH] hemoprotein beta-component (563 aa).

[4Fe-4S] cluster-binding residues include Cys427, Cys433, Cys472, and Cys476. Cys476 contributes to the siroheme binding site.

This sequence belongs to the nitrite and sulfite reductase 4Fe-4S domain family. Alpha(8)-beta(8). The alpha component is a flavoprotein, the beta component is a hemoprotein. Requires siroheme as cofactor. It depends on [4Fe-4S] cluster as a cofactor.

It carries out the reaction hydrogen sulfide + 3 NADP(+) + 3 H2O = sulfite + 3 NADPH + 4 H(+). The protein operates within sulfur metabolism; hydrogen sulfide biosynthesis; hydrogen sulfide from sulfite (NADPH route): step 1/1. Functionally, component of the sulfite reductase complex that catalyzes the 6-electron reduction of sulfite to sulfide. This is one of several activities required for the biosynthesis of L-cysteine from sulfate. This is Sulfite reductase [NADPH] hemoprotein beta-component from Shewanella frigidimarina (strain NCIMB 400).